A 263-amino-acid polypeptide reads, in one-letter code: MESTLRRTYPHHTWHLVNEGDSGAFVYRLTGHGPELYAKIAPRTPENSAFHLDGEADRLDWLARHGISVPRVVERGADDTTAWLVTEAVPGAAASEEWPEDERAAVVDAIAEMARTLHELPVSECPFDRRLDVTGEARHNVREGLVDLDDLQEEPAGWTGDQLLAELDLTRPEKEDLVVCHGDLCPNNVLLDPETHRITGLIDVGRLRLATCHADLALAARELAIDEDPWFGPAYAERFLERYGAHHVDQEKMAFYQLLDEFF.

The Proton acceptor role is filled by D183.

Belongs to the aminoglycoside phosphotransferase family.

It catalyses the reaction kanamycin A + ATP = kanamycin 3'-phosphate + ADP + H(+). Its function is as follows. Resistance to kanamycin and structurally-related aminoglycosides, including amikacin. The protein is Aminoglycoside 3'-phosphotransferase (rph) of Streptomyces ribosidificus.